A 606-amino-acid polypeptide reads, in one-letter code: Preterminal protein (606 aa).

Positions 320–329 (RLPVRRRRRR) match the Nuclear localization signal motif. At Ser-515 the chain carries O-(5'-phospho-DNA)-serine. The disordered stretch occupies residues 573 to 606 (HLPLPERQADIPLPPLPAGPEPPLPPGARPRRRF). A compositionally biased stretch (pro residues) spans 584 to 600 (PLPPLPAGPEPPLPPGA).

The protein belongs to the adenoviridae terminal protein family. As to quaternary structure, heterodimer with the polymerase; this heterodimer binds to bp 9 to 18 of the genome. Interacts with host POU2F1; POU2F1 binds to the auxiliary sequences in the inverted terminal repeats and tethers the pTP-POL heterodimer to the origin DNA thereby participating in the assembly of the pre-initiation complex (POL-TP-DBP-NFIA-POU2F1). Post-translationally, preterminal protein is used to replicate viral genome, upon genomic encapsidation it is processed first into iTP and finally into TP by adenovirus protease.

The protein resides in the host nucleus matrix. Its function is as follows. Protein covalently bound to the viral DNA that acts as a primer for viral genomic replication by DNA strand displacement. Assembles on the viral origin of replication in an initiation complex with viral polymerase, DBP, host NFIA and host POU2F1/OCT1. During initiation, the polymerase covalently couples the first dCTP with Ser-580 of pTP. The terminal protein stimulates the template activity over 20 fold compared to protein-free templates. Neo-synthesized viral genomes are linked to two preterminal proteins, one for each 5' end. These new genomes are encapsidated in the nucleus, and during capsid maturation by viral protease, preterminal protein is first cleaved into intermediary (iTP), then into mature TP. May play a role in host nuclear matrix localization of genomic DNA. The protein is Preterminal protein of Human adenovirus A serotype 12 (HAdV-12).